The following is a 313-amino-acid chain: MAPTTTNPMNETIPGSIDIETLIPNLMIIIFGLVGLTGNVILFWLLGFHLHRNAFLVYILNLALADFLFLLCHIINSTMLLLKVHLPNNILNHCFDIIMTVLYITGLSMLSAISTERCLSVLCPIWYRCRRPEHTSTVLCAVIWFLPLLICILNGYFCHFFGPKYVIDSVCLATNFFIRTYPMFLFIVLCLSTLALLARLFCGAGKTKFTRLFVTIMLTVLVFLLCGLPLGFFWFLVPWINRDFSVLDYILFQTSLVLTSVNSCANPIIYFFVGSFRHRLKHKTLKMVLQSALQDTPETPENMVEMSRSKAEP.

The Extracellular portion of the chain corresponds to 1–25 (MAPTTTNPMNETIPGSIDIETLIPN). Asparagine 10 carries N-linked (GlcNAc...) asparagine glycosylation. Residues 26–46 (LMIIIFGLVGLTGNVILFWLL) traverse the membrane as a helical segment. Residues 47–54 (GFHLHRNA) lie on the Cytoplasmic side of the membrane. Residues 55–75 (FLVYILNLALADFLFLLCHII) form a helical membrane-spanning segment. N-linked (GlcNAc...) asparagine glycosylation is present at asparagine 76. Over 76-93 (NSTMLLLKVHLPNNILNH) the chain is Extracellular. The chain crosses the membrane as a helical span at residues 94–114 (CFDIIMTVLYITGLSMLSAIS). At 115-137 (TERCLSVLCPIWYRCRRPEHTST) the chain is on the cytoplasmic side. A helical transmembrane segment spans residues 138–158 (VLCAVIWFLPLLICILNGYFC). The Extracellular portion of the chain corresponds to 159–182 (HFFGPKYVIDSVCLATNFFIRTYP). A helical transmembrane segment spans residues 183-203 (MFLFIVLCLSTLALLARLFCG). Residues 204-219 (AGKTKFTRLFVTIMLT) are Cytoplasmic-facing. The chain crosses the membrane as a helical span at residues 220-240 (VLVFLLCGLPLGFFWFLVPWI). The Extracellular segment spans residues 241-255 (NRDFSVLDYILFQTS). Residues 256–276 (LVLTSVNSCANPIIYFFVGSF) traverse the membrane as a helical segment. The Cytoplasmic segment spans residues 277-313 (RHRLKHKTLKMVLQSALQDTPETPENMVEMSRSKAEP).

Belongs to the G-protein coupled receptor 1 family. Mas subfamily. Expressed in a subset of sensory neurons that includes nociceptors. Expressed in the subclass of non-peptidergic sensory neurons that are IB4(+) and VR1(-).

The protein localises to the cell membrane. Orphan receptor. May be a receptor for RFamide-family neuropeptides such as NPFF and NPAF, which are analgesic in vivo. May regulate nociceptor function and/or development, including the sensation or modulation of pain. The polypeptide is Mas-related G-protein coupled receptor member A4 (Mrgpra4) (Mus musculus (Mouse)).